A 343-amino-acid polypeptide reads, in one-letter code: Methionine import ATP-binding protein MetN (343 aa).

Residues 2–241 (IKLFHINKIF…PKTPIAQAFI (240 aa)) form the ABC transporter domain. 38 to 45 (GSSGAGKS) is an ATP binding site.

It belongs to the ABC transporter superfamily. Methionine importer (TC 3.A.1.24) family. In terms of assembly, the complex is composed of two ATP-binding proteins (MetN), two transmembrane proteins (MetI) and a solute-binding protein (MetQ).

The protein localises to the cell inner membrane. It catalyses the reaction L-methionine(out) + ATP + H2O = L-methionine(in) + ADP + phosphate + H(+). The catalysed reaction is D-methionine(out) + ATP + H2O = D-methionine(in) + ADP + phosphate + H(+). In terms of biological role, part of the ABC transporter complex MetNIQ involved in methionine import. Responsible for energy coupling to the transport system. The protein is Methionine import ATP-binding protein MetN of Photorhabdus laumondii subsp. laumondii (strain DSM 15139 / CIP 105565 / TT01) (Photorhabdus luminescens subsp. laumondii).